A 467-amino-acid polypeptide reads, in one-letter code: Probable circularly permuted 1,3-beta-glucanase TOS1 (467 aa).

The N-terminal stretch at 1–21 (MKFSSTTLLAGLSSLTATVSA) is a signal peptide. Positions 158–172 (PAVSSAAADDNANSG) are enriched in low complexity. 2 disordered regions span residues 158-187 (PAVS…GYGS) and 200-223 (SDIS…TASV). The segment covering 173-185 (SGSGSSAGSGSGY) has biased composition (gly residues). Residues 203 to 222 (STKSAPTSTSAQPSSSETAS) show a composition bias toward low complexity. Positions 374 to 379 (ELDLFE) match the ExDxxE motif motif. The tract at residues 391–413 (HLHDGQGSSQNSNNGGGGSQDYF) is disordered.

It belongs to the PGA52 family. Cleaved by KEX2 in vitro.

It is found in the secreted. The catalysed reaction is Hydrolysis of (1-&gt;3)-beta-D-glucosidic linkages in (1-&gt;3)-beta-D-glucans.. In terms of biological role, probable circularly permuted 1,3-beta-glucanase involved in cell wall modification through beta-1,3-glucan network alterations such as increased branching or remodeling. Plays a role in engulfment by host macrophages. The polypeptide is Probable circularly permuted 1,3-beta-glucanase TOS1 (Candida albicans (strain SC5314 / ATCC MYA-2876) (Yeast)).